Here is a 239-residue protein sequence, read N- to C-terminus: Ribosomal RNA large subunit methyltransferase E (239 aa).

Gly-81, Trp-83, Asp-104, Asp-120, and Asp-144 together coordinate S-adenosyl-L-methionine. Lys-184 functions as the Proton acceptor in the catalytic mechanism.

This sequence belongs to the class I-like SAM-binding methyltransferase superfamily. RNA methyltransferase RlmE family.

Its subcellular location is the cytoplasm. The catalysed reaction is uridine(2552) in 23S rRNA + S-adenosyl-L-methionine = 2'-O-methyluridine(2552) in 23S rRNA + S-adenosyl-L-homocysteine + H(+). Its function is as follows. Specifically methylates the uridine in position 2552 of 23S rRNA at the 2'-O position of the ribose in the fully assembled 50S ribosomal subunit. This chain is Ribosomal RNA large subunit methyltransferase E, found in Rhizobium rhizogenes (strain K84 / ATCC BAA-868) (Agrobacterium radiobacter).